The primary structure comprises 910 residues: MEEEPYKRKLTKAEKKAKYRTDYAEPLKSRREVLKAIMNGPESERERKVRAKNREFFNEDYRSGVNIYGMAVDMMKAMPDRGKTSGQSLAVWYLEDFGVWLKESGQETELRQKYLTGTIQINALDVCTIGQKQLLSEIFDITKEKFTEDITQLLDAAIKKQDFSVAADMAIQYNLLRDHHFEHLVLPLMLSGKDQTAYKLISNNERMQQQLVEFFDRMVGISVVAVEEMLKPYKETKIMTIPMEKLTGKTLDKLISTIINKNTHEYNFSRELSKFAKNHSQNGNLKALKFNISERYEKGKSDDNYFQHMVETFTKAEDVREPILFYLWSSNDTEKQIDAICFAIYLGIASSSSYQLPNVMRDFFRQPDSKLREAKELLVRRKTLQVPLNGEQLFVFENERRTQIHMVKTESEMNYLCSEIKSLSDEPAPVYVGFDSEWKPSNLTAVHDSKIAIIQLFFKNCVWLVDCVELEKANMADDWWQKFASRLFGDSPVKVVGFDMRNDLDAMATIPALKSSMKIEDTKNAFDLKRLAENVCDIDMEILELPKKTFKLADLTHYLLGLELDKTEQCSNWQCRPLRKKQIVYAALDAVVVVETFKKILSIVEEKNKDADIEKIVRESNVMAPKKDKGHKSYRKLKTIPWLELYDILRSHRNPTRSPQRPHDIKVIVDTMLIGFGKNLRRVGIDVILPKDVSDFRKYLKEIERVGGEHLRHIITVPSKSYEALKMDYDNYTIAIPELNNMSPVDQLIEFFDLFNVDIRPEDVYPRCTECNSRLQIKFPGPVLHFLHQYCVIHVQNVYRADMSEFPLEEWWNRMLHINPDDYDGVKVEMSRPSPTSKWIVATVPTGCLHITRQTALHTNLPDGIEVRIHKVPDDEFKRRNLSFYVCGECGTVACDGRGNQASESTSQEC.

The 202-residue stretch at 404–605 (IHMVKTESEM…TFKKILSIVE (202 aa)) folds into the 3'-5' exonuclease domain.

The protein belongs to the mut-7 family. Mg(2+) serves as cofactor.

In terms of biological role, represses the transposition of Tc1, Tc3, Tc4, and Tc5, perhaps by degrading transposon-specific messages. Also affects sperm development, sensitivity to RNAi of mainly germline expressed genes, silencing of some germline transgenes, X chromosome loss, and is required for cosuppression (functional silencing of chromosomal loci induced by transgenes) and for silencing induced by antisense RNA oligomers. The chain is Exonuclease mut-7 (mut-7) from Caenorhabditis elegans.